A 278-amino-acid chain; its full sequence is uncharacterized protein (278 aa).

The region spanning 1–55 (MKIRERFSMVDLPVLIITAAIIGHDKYKAFHAGANDILQKPYHYSEFMARIQNLI) is the Response regulatory domain.

This is an uncharacterized protein from Bacillus subtilis (strain 168).